The sequence spans 77 residues: U11-lycotoxin-Ls1a (77 aa).

Positions 1-20 are cleaved as a signal peptide; it reads MKLIILTGLVLFAIVSFIEA. A propeptide spanning residues 21-26 is cleaved from the precursor; sequence EEETGR.

It belongs to the neurotoxin 19 (CSTX) family. 10 (U11-Lctx) subfamily. In terms of processing, contains 4 disulfide bonds. Expressed by the venom gland.

The protein resides in the secreted. In Lycosa singoriensis (Wolf spider), this protein is U11-lycotoxin-Ls1a.